A 253-amino-acid polypeptide reads, in one-letter code: Tetraspanin-3 (253 aa).

Residues 1-11 (MGQCGITSSKT) are Cytoplasmic-facing. Residues 12–32 (VLVFLNLIFWGAAGILCYVGA) form a helical membrane-spanning segment. The Extracellular segment spans residues 33–50 (YVFITYDDYDHFFEDVYT). A helical transmembrane segment spans residues 51–71 (LFPAVVIIAVGALLFIIGLIG). The Cytoplasmic segment spans residues 72–85 (CCATIRESRCGLAT). A helical transmembrane segment spans residues 86-106 (FVFILLLVFVTEVVVVVLGYV). The Extracellular portion of the chain corresponds to 107-212 (YRAKVENEVD…KKLQEILMHV (106 aa)). Asn127, Asn152, Asn167, and Asn183 each carry an N-linked (GlcNAc...) asparagine glycan. A helical transmembrane segment spans residues 213–233 (IWAALAFAAIQLLGMLCACIV). The Cytoplasmic segment spans residues 234–253 (LCRRSRDPAYELLITGGTYA).

It belongs to the tetraspanin (TM4SF) family. Interacts with claudin-11/CLDN11 and integrins.

It localises to the membrane. Functionally, regulates the proliferation and migration of oligodendrocytes, a process essential for normal myelination and repair. The chain is Tetraspanin-3 (Tspan3) from Mus musculus (Mouse).